The chain runs to 219 residues: Uracil-DNA glycosylase (219 aa).

Asp61 functions as the Proton acceptor in the catalytic mechanism.

This sequence belongs to the uracil-DNA glycosylase (UDG) superfamily. UNG family.

The protein localises to the cytoplasm. The catalysed reaction is Hydrolyzes single-stranded DNA or mismatched double-stranded DNA and polynucleotides, releasing free uracil.. Functionally, excises uracil residues from the DNA which can arise as a result of misincorporation of dUMP residues by DNA polymerase or due to deamination of cytosine. This Neisseria gonorrhoeae (strain ATCC 700825 / FA 1090) protein is Uracil-DNA glycosylase.